The primary structure comprises 413 residues: Chloramphenicol efflux pump MT0201 (413 aa).

A run of 12 helical transmembrane segments spans residues 23–43, 55–75, 89–109, 110–130, 150–170, 176–196, 226–246, 256–276, 286–306, 312–332, 353–373, and 378–398; these read LSVLACAAFIYVTAEILPVGA, VVLVGTLLSWYALVAAVTTVP, LVVSLVCLTVSQLVSALAPNF, AVLAAGRVLCAVTHGLLWAVI, IYIGTSLALVVGSPLTAAMSL, LAAVCVTGAAAAVALAARLAL, VLTMIAVTGHFVSYTYIVVII, NLAWLLAAYGVAGLVSVPLVA, AVIVGMTGLTAAFTLLTALAF, AATALLGTGAIVLWGALATAV, GLYVTAFQIGIMAGALLGGLL, and LAMMLTASAGLMGVALFGMTV.

The protein belongs to the major facilitator superfamily.

It is found in the cell membrane. In terms of biological role, active efflux pump that plays an important role in chloramphenicol resistance. This Mycobacterium tuberculosis (strain CDC 1551 / Oshkosh) protein is Chloramphenicol efflux pump MT0201.